The following is a 265-amino-acid chain: Aquaporin-5 (265 aa).

Topologically, residues M1 to K12 are cytoplasmic. Residues A13–L33 traverse the membrane as a helical segment. The Extracellular segment spans residues K34–L39. Residues P40–L60 traverse the membrane as a helical segment. Residues G61 to G65 are Cytoplasmic-facing. The segment at residues G66–L74 is an intramembrane region (discontinuously helical). An NPA 1 motif is present at residues N69–A71. The Cytoplasmic segment spans residues A75–A87. Residues F88 to V108 traverse the membrane as a helical segment. The Extracellular portion of the chain corresponds to A109–T126. N-linked (GlcNAc...) asparagine glycans are attached at residues N124 and N125. A helical transmembrane segment spans residues T127–F147. Residues A148–V158 lie on the Cytoplasmic side of the membrane. Residues G159–F179 traverse the membrane as a helical segment. Residue T180 is a topological domain, extracellular. The discontinuously helical intramembrane region spans G181 to G191. The NPA 2 signature appears at N185–A187. Topologically, residues P192–H203 are extracellular. The chain crosses the membrane as a helical span at residues W204–L224. Over L225–R265 the chain is Cytoplasmic.

It belongs to the MIP/aquaporin (TC 1.A.8) family. Homotetramer; each monomer provides an independent water pore. Interacts with TRPV4; the interaction is probably indirect and regulates TRPV4 activation by hypotonicity. In terms of tissue distribution, detected in skin eccrine sweat glands, at the apical cell membrane and at intercellular canaliculi (at protein level).

The protein resides in the apical cell membrane. The protein localises to the cell membrane. It localises to the cytoplasmic vesicle membrane. It carries out the reaction H2O(in) = H2O(out). In terms of biological role, aquaporins form homotetrameric transmembrane channels, with each monomer independently mediating water transport across the plasma membrane along its osmotic gradient. Plays an important role in fluid secretion in salivary glands. Required for TRPV4 activation by hypotonicity. Together with TRPV4, controls regulatory volume decrease in salivary epithelial cells. Seems to play a redundant role in water transport in the eye, lung and in sweat glands. This chain is Aquaporin-5, found in Homo sapiens (Human).